Consider the following 1181-residue polypeptide: Cellulose synthase-like protein D5 (1181 aa).

The segment covering 1-17 (MVKSAASQSPSPVTITV) has biased composition (polar residues). Disordered regions lie at residues 1-70 (MVKS…DEGR) and 202-229 (KEPYRDINDDPETEEEDEEDEAKPLPQM). Over residues 48-59 (SSRATRRTSISS) the composition is skewed to low complexity. The segment covering 210–222 (DDPETEEEDEEDE) has biased composition (acidic residues). A run of 2 helical transmembrane segments spans residues 312-332 (AIISPYRLLIALRLVALGLFL) and 343-363 (AMWLWGMSTTCELWFALSWLL). The active site involves aspartate 443. The stretch at 497-542 (VRERRRVKREYDEFKVRINSLPEAIRRRSDAYNVHEELRAKKKQME) forms a coiled coil. Aspartate 884 is a catalytic residue. Transmembrane regions (helical) follow at residues 966–986 (LFLIVYCILPAISLFSGQFIV), 991–1011 (ITFLIYLLSITLTLCMLSLLE), 1038–1058 (PAAVLQGLLKVIAGVDISFTL), 1082–1102 (FLMVPPLTIMMVNMIAIAVGL), 1116–1136 (LVGGVFFSFWVLCHLYPFAKG), and 1146–1166 (TIVFVWSGLLSIIVSLLWVYI).

It belongs to the glycosyltransferase 2 family. Plant cellulose synthase-like D subfamily. In terms of tissue distribution, expressed in vascular tissues.

Its subcellular location is the golgi apparatus membrane. Its function is as follows. Involved in stem and root growth. Possesses xylan and homogalacturonan synthase activity. The polypeptide is Cellulose synthase-like protein D5 (CSLD5) (Arabidopsis thaliana (Mouse-ear cress)).